The chain runs to 81 residues: Photosystem I iron-sulfur center (81 aa).

4Fe-4S ferredoxin-type domains are found at residues 2–31 (AHSVKIYDTCIGCTQCVRACPTDVLEMVPW) and 39–68 (IASAPRTEDCVGCKRCESACPTDFLSVRVY). 8 residues coordinate [4Fe-4S] cluster: cysteine 11, cysteine 14, cysteine 17, cysteine 21, cysteine 48, cysteine 51, cysteine 54, and cysteine 58.

As to quaternary structure, the eukaryotic PSI reaction center is composed of at least 11 subunits. [4Fe-4S] cluster serves as cofactor.

Its subcellular location is the plastid. The protein resides in the chloroplast thylakoid membrane. It catalyses the reaction reduced [plastocyanin] + hnu + oxidized [2Fe-2S]-[ferredoxin] = oxidized [plastocyanin] + reduced [2Fe-2S]-[ferredoxin]. Its function is as follows. Apoprotein for the two 4Fe-4S centers FA and FB of photosystem I (PSI); essential for photochemical activity. FB is the terminal electron acceptor of PSI, donating electrons to ferredoxin. The C-terminus interacts with PsaA/B/D and helps assemble the protein into the PSI complex. Required for binding of PsaD and PsaE to PSI. PSI is a plastocyanin-ferredoxin oxidoreductase, converting photonic excitation into a charge separation, which transfers an electron from the donor P700 chlorophyll pair to the spectroscopically characterized acceptors A0, A1, FX, FA and FB in turn. This chain is Photosystem I iron-sulfur center, found in Chlorokybus atmophyticus (Soil alga).